Reading from the N-terminus, the 336-residue chain is Acetyl-coenzyme A carboxylase carboxyl transferase subunit beta (336 aa).

Positions 27–297 (LWTKCESCQG…VAPAPAPAAT (271 aa)) constitute a CoA carboxyltransferase N-terminal domain. 4 residues coordinate Zn(2+): cysteine 31, cysteine 34, cysteine 50, and cysteine 53. Residues 31-53 (CESCQGILYRPDLERNLEVCPKC) form a C4-type zinc finger. The segment at 287 to 336 (SVAPAPAPAATVDPEPESAEPEAPAEEAGPAGAAGDQAGESQDEGDPRNA) is disordered. Residues 300-311 (PEPESAEPEAPA) show a composition bias toward acidic residues. Low complexity predominate over residues 312–326 (EEAGPAGAAGDQAGE).

The protein belongs to the AccD/PCCB family. In terms of assembly, acetyl-CoA carboxylase is a heterohexamer composed of biotin carboxyl carrier protein (AccB), biotin carboxylase (AccC) and two subunits each of ACCase subunit alpha (AccA) and ACCase subunit beta (AccD). Zn(2+) serves as cofactor.

It is found in the cytoplasm. The catalysed reaction is N(6)-carboxybiotinyl-L-lysyl-[protein] + acetyl-CoA = N(6)-biotinyl-L-lysyl-[protein] + malonyl-CoA. It participates in lipid metabolism; malonyl-CoA biosynthesis; malonyl-CoA from acetyl-CoA: step 1/1. In terms of biological role, component of the acetyl coenzyme A carboxylase (ACC) complex. Biotin carboxylase (BC) catalyzes the carboxylation of biotin on its carrier protein (BCCP) and then the CO(2) group is transferred by the transcarboxylase to acetyl-CoA to form malonyl-CoA. This chain is Acetyl-coenzyme A carboxylase carboxyl transferase subunit beta, found in Halorhodospira halophila (strain DSM 244 / SL1) (Ectothiorhodospira halophila (strain DSM 244 / SL1)).